Consider the following 325-residue polypeptide: Lactonase drp35 (325 aa).

Residues E46, T108, G110, D128, T131, Y133, D136, N183, D234, and S235 each contribute to the Ca(2+) site. D234 functions as the Proton donor in the catalytic mechanism.

It belongs to the SMP-30/CGR1 family. The cofactor is Ca(2+).

It is found in the cytoplasm. Its function is as follows. Exhibits lactonase activity. Acts in cells with perturbed membrane integrity and is possibly related to the membrane homeostasis. The chain is Lactonase drp35 (drp35) from Staphylococcus epidermidis (strain ATCC 12228 / FDA PCI 1200).